Reading from the N-terminus, the 435-residue chain is Chromosomal replication initiator protein DnaA (435 aa).

Positions 1–70 (MNIGEKILLL…KHLFEIQNSI (70 aa)) are domain I, interacts with DnaA modulators. Positions 70–98 (IKVDVSILLKNQVESKKAEQKSVQKQQHS) are domain II. A domain III, AAA+ region region spans residues 99-313 (LLNPSHTFEN…GILSKLHAYS (215 aa)). Residues G143, G145, K146, and T147 each coordinate ATP. The tract at residues 314-435 (QLMHVDIDLQ…ELTNKITSSS (122 aa)) is domain IV, binds dsDNA.

It belongs to the DnaA family. Oligomerizes as a right-handed, spiral filament on DNA at oriC.

It localises to the cytoplasm. Functionally, plays an essential role in the initiation and regulation of chromosomal replication. ATP-DnaA binds to the origin of replication (oriC) to initiate formation of the DNA replication initiation complex once per cell cycle. Binds the DnaA box (a 9 base pair repeat at the origin) and separates the double-stranded (ds)DNA. Forms a right-handed helical filament on oriC DNA; dsDNA binds to the exterior of the filament while single-stranded (ss)DNA is stabiized in the filament's interior. The ATP-DnaA-oriC complex binds and stabilizes one strand of the AT-rich DNA unwinding element (DUE), permitting loading of DNA polymerase. After initiation quickly degrades to an ADP-DnaA complex that is not apt for DNA replication. Binds acidic phospholipids. In Sulfurimonas denitrificans (strain ATCC 33889 / DSM 1251) (Thiomicrospira denitrificans (strain ATCC 33889 / DSM 1251)), this protein is Chromosomal replication initiator protein DnaA.